The following is a 329-amino-acid chain: U5 small nuclear ribonucleoprotein TSSC4 (329 aa).

Disordered stretches follow at residues 1–88 (MAEA…MSST) and 104–156 (ARRA…PDYV). The segment covering 22-41 (DTLPSDTVSLSDSDSDLSLP) has biased composition (low complexity). Ser-60, Ser-67, Ser-86, Ser-132, Ser-143, and Ser-146 each carry phosphoserine. The hom2; mediates interaction with the U5 snRNP complexes and required for spliceosomal tri-snRNP complex assembly stretch occupies residues 77–104 (VQPFHLRGMSSTFSQRSRDIFDCLEGAA). Residues 149 to 316 (VPPVPDYVAH…SRKRSRDHFR (168 aa)) are interaction with SNRNP200. The interval 150 to 186 (PPVPDYVAHPERWTKYSLEDVTEVSEQSNQATALAFL) is hom3; mediates interaction with the U5 snRNP complexes. The hom4; necessary for interaction with the PRPF19 complex and required for spliceosomal tri-snRNP complex assembly stretch occupies residues 201-250 (FNQDPSSCGEGRVIFTKPVRGVEARHERKRVLGKVGEPGRGGLGNPATDR). Lys-217 carries the post-translational modification N6-acetyllysine. Residues 221–329 (GVEARHERKR…SSPEDPGAEV (109 aa)) are disordered. The residue at position 265 (Ser-265) is a Phosphoserine. Residues 306 to 317 (GSRKRSRDHFRN) show a composition bias toward basic residues. The residue at position 321 (Ser-321) is a Phosphoserine.

It belongs to the TSSC4 family. In terms of assembly, interacts in a RNA-independent manner with distinct U5 snRNP-containing complexes, the mono-U5 snRNP and the post-splicing U5 snRNP-PRPF19 complex. Interacts with SNRNP200; the interaction is direct, excludes recruitment of C9ORF78 and WBP4 to SNRNP200 and negatively regulates its RNA helicase activity. Interacts with PRPF8; the interaction is direct. Expressed in fetal brain, lung, liver and kidney. Widely expressed in adult tissues.

Its subcellular location is the nucleus. The protein localises to the cytoplasm. Protein associated with the U5 snRNP, during its maturation and its post-splicing recycling and which is required for spliceosomal tri-snRNP complex assembly in the nucleus. Has a molecular sequestering activity and transiently hinders SNRNP200 binding sites for constitutive splicing factors that intervene later during the assembly of the spliceosome and splicing. Together with its molecular sequestering activity, may also function as a molecular adapter and placeholder, coordinating the assembly of the U5 snRNP and its association with the U4/U6 di-snRNP. This Homo sapiens (Human) protein is U5 small nuclear ribonucleoprotein TSSC4.